Consider the following 874-residue polypeptide: Alanine--tRNA ligase (874 aa).

Zn(2+)-binding residues include histidine 562, histidine 566, cysteine 664, and histidine 668.

It belongs to the class-II aminoacyl-tRNA synthetase family. The cofactor is Zn(2+).

The protein localises to the cytoplasm. It catalyses the reaction tRNA(Ala) + L-alanine + ATP = L-alanyl-tRNA(Ala) + AMP + diphosphate. In terms of biological role, catalyzes the attachment of alanine to tRNA(Ala) in a two-step reaction: alanine is first activated by ATP to form Ala-AMP and then transferred to the acceptor end of tRNA(Ala). Also edits incorrectly charged Ser-tRNA(Ala) and Gly-tRNA(Ala) via its editing domain. This chain is Alanine--tRNA ligase, found in Neisseria meningitidis serogroup B (strain ATCC BAA-335 / MC58).